The primary structure comprises 591 residues: Adsorption protein P2 (591 aa).

A disulfide bond links Cys254 and Cys277.

The protein resides in the virion. In terms of biological role, adsorption protein. In association with P31 and trimeric P5, forms the spike complexes located at the 5-fold vertices of the capsid. Involved in recognition and attachment to the receptor on the surface of the host. Likely triggers the processes of vertex disassembly, membrane tube formation, and subsequent DNA injection. Essential for viral infectivity. The sequence is that of Adsorption protein P2 (II) from Acinetobacter calcoaceticus (Arthrobacter siderocapsulatus).